The chain runs to 122 residues: Large ribosomal subunit protein uL14 (122 aa).

The protein belongs to the universal ribosomal protein uL14 family. As to quaternary structure, part of the 50S ribosomal subunit. Forms a cluster with proteins L3 and L19. In the 70S ribosome, L14 and L19 interact and together make contacts with the 16S rRNA in bridges B5 and B8.

In terms of biological role, binds to 23S rRNA. Forms part of two intersubunit bridges in the 70S ribosome. In Syntrophus aciditrophicus (strain SB), this protein is Large ribosomal subunit protein uL14.